Here is a 136-residue protein sequence, read N- to C-terminus: ATP synthase epsilon chain (136 aa).

This sequence belongs to the ATPase epsilon chain family. In terms of assembly, F-type ATPases have 2 components, CF(1) - the catalytic core - and CF(0) - the membrane proton channel. CF(1) has five subunits: alpha(3), beta(3), gamma(1), delta(1), epsilon(1). CF(0) has three main subunits: a, b and c.

The protein localises to the cell membrane. Produces ATP from ADP in the presence of a proton gradient across the membrane. The sequence is that of ATP synthase epsilon chain from Ureaplasma parvum serovar 3 (strain ATCC 27815 / 27 / NCTC 11736).